A 414-amino-acid chain; its full sequence is NADH-ubiquinone oxidoreductase chain 4 (414 aa).

10 helical membrane-spanning segments follow: residues 18–38 (LVQL…MIGV), 47–67 (IAAF…LMSI), 96–116 (IIFI…PLHL), 126–146 (PTAG…YGYI), 160–180 (YFPI…IATL), 188–208 (IVAY…FSGV), 216–236 (IILM…IGVI), 254–274 (MMPI…AFPI), 293–313 (IIIA…SFWL), and 375–395 (VNIF…IVGM).

This sequence belongs to the complex I subunit 4 family.

Its subcellular location is the mitochondrion membrane. The enzyme catalyses a ubiquinone + NADH + 5 H(+)(in) = a ubiquinol + NAD(+) + 4 H(+)(out). Functionally, core subunit of the mitochondrial membrane respiratory chain NADH dehydrogenase (Complex I) that is believed to belong to the minimal assembly required for catalysis. Complex I functions in the transfer of electrons from NADH to the respiratory chain. The immediate electron acceptor for the enzyme is believed to be ubiquinone. The protein is NADH-ubiquinone oxidoreductase chain 4 (nad4) of Dictyostelium citrinum (Slime mold).